The sequence spans 178 residues: Large ribosomal subunit protein uL6 (178 aa).

It belongs to the universal ribosomal protein uL6 family. Part of the 50S ribosomal subunit.

Functionally, this protein binds to the 23S rRNA, and is important in its secondary structure. It is located near the subunit interface in the base of the L7/L12 stalk, and near the tRNA binding site of the peptidyltransferase center. The chain is Large ribosomal subunit protein uL6 from Methanobrevibacter smithii (strain ATCC 35061 / DSM 861 / OCM 144 / PS).